Reading from the N-terminus, the 212-residue chain is Imidazole glycerol phosphate synthase subunit HisH (212 aa).

A Glutamine amidotransferase type-1 domain is found at 3–212 (DIAIVDYGMG…LGNFVRWKPV (210 aa)). Cys82 acts as the Nucleophile in catalysis. Residues His191 and Glu193 contribute to the active site.

Heterodimer of HisH and HisF.

It localises to the cytoplasm. It carries out the reaction 5-[(5-phospho-1-deoxy-D-ribulos-1-ylimino)methylamino]-1-(5-phospho-beta-D-ribosyl)imidazole-4-carboxamide + L-glutamine = D-erythro-1-(imidazol-4-yl)glycerol 3-phosphate + 5-amino-1-(5-phospho-beta-D-ribosyl)imidazole-4-carboxamide + L-glutamate + H(+). The catalysed reaction is L-glutamine + H2O = L-glutamate + NH4(+). It participates in amino-acid biosynthesis; L-histidine biosynthesis; L-histidine from 5-phospho-alpha-D-ribose 1-diphosphate: step 5/9. Its function is as follows. IGPS catalyzes the conversion of PRFAR and glutamine to IGP, AICAR and glutamate. The HisH subunit catalyzes the hydrolysis of glutamine to glutamate and ammonia as part of the synthesis of IGP and AICAR. The resulting ammonia molecule is channeled to the active site of HisF. This chain is Imidazole glycerol phosphate synthase subunit HisH, found in Nitrosospira multiformis (strain ATCC 25196 / NCIMB 11849 / C 71).